A 667-amino-acid chain; its full sequence is Gamma-tubulin complex component 4 (667 aa).

Residues 424-446 form a disordered region; that stretch reads DHKADATQPREVPSRETSPREAP.

Belongs to the TUBGCP family. As to quaternary structure, component of the gamma-tubulin ring complex (gTuRC) consisting of TUBGCP2, TUBGCP3, TUBGCP4, TUBGCP5 and TUBGCP6 and gamma-tubulin TUBG1 or TUBG2. TUBGCP2, TUBGCP3, TUBGCP4, TUBGCP5 and TUBGCP6 assemble in a 5:5:2:1:1 stoichiometry; each is associated with a gamma-tubulin, thereby arranging 14 gamma-tubulins in a helical manner. Gamma-tubulin at the first position is blocked by TUBGCP3 at the last position, allowing 13 protafilaments to grow into a microtubule. The gTuRC (via TUBGCP3 and TUBGCP6) interacts with ACTB and MZT1; the interactions form a luminal bridge that stabilizes the initial structure during complex assembly. The gTuRC (via TUBGCP2) interacts with MZT2A/MZT2B and CDK5RAP2 (via CM1 motif); the interactions play a role in gTuRC activation. Interacts with NINL. Interacts with ATF5; the ATF5:PCNT:polyglutamylated tubulin (PGT) tripartite unites the mother centriole and the pericentriolar material (PCM) in the centrosome.

It is found in the cytoplasm. Its subcellular location is the cytoskeleton. The protein localises to the microtubule organizing center. It localises to the centrosome. In terms of biological role, component of the gamma-tubulin ring complex (gTuRC) which mediates microtubule nucleation. The gTuRC regulates the minus-end nucleation of alpha-beta tubulin heterodimers that grow into microtubule protafilaments, a critical step in centrosome duplication and spindle formation. This chain is Gamma-tubulin complex component 4 (Tubgcp4), found in Mus musculus (Mouse).